The sequence spans 140 residues: uncharacterized protein (140 aa).

This is an uncharacterized protein from Escherichia coli O157:H7.